Consider the following 629-residue polypeptide: tRNA uridine 5-carboxymethylaminomethyl modification enzyme MnmG (629 aa).

FAD is bound by residues 13 to 18 (GGGHAG), V125, and S180. NAD(+) is bound at residue 273-287 (GPRYCPSIEDKVMRF). Q370 is a binding site for FAD.

It belongs to the MnmG family. Homodimer. Heterotetramer of two MnmE and two MnmG subunits. FAD serves as cofactor.

It is found in the cytoplasm. NAD-binding protein involved in the addition of a carboxymethylaminomethyl (cmnm) group at the wobble position (U34) of certain tRNAs, forming tRNA-cmnm(5)s(2)U34. This is tRNA uridine 5-carboxymethylaminomethyl modification enzyme MnmG from Aliivibrio fischeri (strain ATCC 700601 / ES114) (Vibrio fischeri).